Here is a 241-residue protein sequence, read N- to C-terminus: MTGNLSGENPAESVSTTLAARPEDIALDVAHTAVVVIDMQNAYASPGGYVDLAGFDIAGAAGVIGRIATVLESARTAGMQVVFLQNGWDPDYVEAGGPQSPNWHKSNALKTMRARPELEGKLLARGGWDYALVDGLKPQPGDIQVHKPRYSAFFHSQLDSVLRARGIRNLVFVGIATNVCVESTLRDGFHLEYFCVLLEDATHHLGPEFVQAATVYNVEKFFGWVSTVEDFCASMRAIAKP.

Catalysis depends on Asp38, which acts as the Proton acceptor. Residue Lys147 is part of the active site. Cys180 serves as the catalytic Nucleophile.

The protein belongs to the isochorismatase family. RutB subfamily.

The enzyme catalyses (Z)-3-ureidoacrylate + H2O + H(+) = (Z)-3-aminoacrylate + NH4(+) + CO2. The catalysed reaction is (Z)-3-ureidoacrylate + H2O = (Z)-3-aminoacrylate + carbamate + H(+). It catalyses the reaction (Z)-2-methylureidoacrylate + H2O + H(+) = (Z)-2-methylaminoacrylate + NH4(+) + CO2. Functionally, hydrolyzes ureidoacrylate to form aminoacrylate and carbamate. The carbamate hydrolyzes spontaneously, thereby releasing one of the nitrogen atoms of the pyrimidine ring as ammonia and one of its carbon atoms as CO2. This chain is Ureidoacrylate amidohydrolase RutB, found in Haliangium ochraceum (strain DSM 14365 / JCM 11303 / SMP-2).